The chain runs to 619 residues: 1-deoxy-D-xylulose-5-phosphate synthase (619 aa).

Thiamine diphosphate-binding positions include histidine 74 and 115–117 (GHS). Aspartate 146 contacts Mg(2+). Thiamine diphosphate-binding positions include 147–148 (GA), asparagine 175, tyrosine 285, and glutamate 365. Residue asparagine 175 participates in Mg(2+) binding.

It belongs to the transketolase family. DXPS subfamily. As to quaternary structure, homodimer. Mg(2+) is required as a cofactor. Thiamine diphosphate serves as cofactor.

It carries out the reaction D-glyceraldehyde 3-phosphate + pyruvate + H(+) = 1-deoxy-D-xylulose 5-phosphate + CO2. It functions in the pathway metabolic intermediate biosynthesis; 1-deoxy-D-xylulose 5-phosphate biosynthesis; 1-deoxy-D-xylulose 5-phosphate from D-glyceraldehyde 3-phosphate and pyruvate: step 1/1. Catalyzes the acyloin condensation reaction between C atoms 2 and 3 of pyruvate and glyceraldehyde 3-phosphate to yield 1-deoxy-D-xylulose-5-phosphate (DXP). This Clostridium perfringens (strain 13 / Type A) protein is 1-deoxy-D-xylulose-5-phosphate synthase.